The sequence spans 519 residues: Cytochrome P450 52A10 (519 aa).

Cys466 is a binding site for heme.

The protein belongs to the cytochrome P450 family. Heme serves as cofactor.

It localises to the membrane. Functionally, together with an NADPH cytochrome P450 the enzyme system catalyzes the terminal hydroxylation as the first step in the assimilation of alkanes and fatty acids. The protein is Cytochrome P450 52A10 (CYP52A10) of Candida maltosa (Yeast).